A 302-amino-acid polypeptide reads, in one-letter code: 2-phosphoglycerate kinase (302 aa).

Residues Ile-2 to Ile-89 enclose the ATP-cone domain.

It belongs to the 2-phosphoglycerate kinase family. The cofactor is a divalent metal cation.

The catalysed reaction is (2R)-2-phosphoglycerate + ATP = (2R)-2,3-bisphosphoglycerate + ADP + H(+). The protein operates within thermoadapter biosynthesis; cyclic 2,3-diphosphoglycerate biosynthesis; cyclic 2,3-diphosphoglycerate from 2-phospho-D-glycerate: step 1/2. In terms of biological role, catalyzes the phosphorylation of 2-phosphoglycerate to 2,3-diphosphoglycerate. Involved in the biosynthesis of cyclic 2,3-bisphosphoglycerate, a thermoprotectant. This is 2-phosphoglycerate kinase from Pyrococcus furiosus (strain ATCC 43587 / DSM 3638 / JCM 8422 / Vc1).